The primary structure comprises 488 residues: MGKFLATLILFFQFCPLILGDYSPSCCTLTIGVSSYHSKPCNPAQPVCSWTLDLLALSADQALQPPCPNLVAYSSYHATYSLYLFPHWIKKPNRNGGGYYSASYSDPCSLKCPYLGCQSWTCPYTGAVSSPYWKFQQDVNFTQEVSRLNINLHFSKCGFPFSLLVDAPGYDPIWFLNTEPSQLPPTTPPLLPHSNLDHILEPSIPWKSKLLTLVQLTLQSTNYTCIVCIDRASLSTWHVLYSPNVSVPSSSSTPLLYPSLALPAPHLTLPFNWTHCFDPQIQAIVSSPCHNSLILPPFSLSPVPTLGSRSRRAVPVAVWLVSALAIGAGVAGGITGSMSLASGKSLLHEVDKDISQLTQAIVKNHKNLLKIAQYAAQNRRGLDLLFWEQGGLCKALQEQCCFLNITNSHVSMLQERPPLENRVLTGWGLNWDLGLSQWAREALQTGITLVALLLLVILAGPCILRQLRHLPSRVRYPHYSLINPESSL.

Positions 1-20 (MGKFLATLILFFQFCPLILG) are cleaved as a signal peptide. The Extracellular portion of the chain corresponds to 21-442 (DYSPSCCTLT…LGLSQWAREA (422 aa)). N-linked (GlcNAc...) asparagine; by host glycosylation is found at asparagine 140 and asparagine 222. Positions 225–228 (CIVC) match the CXXC motif. 3 cysteine pairs are disulfide-bonded: cysteine 225–cysteine 228, cysteine 225–cysteine 401, and cysteine 393–cysteine 400. N-linked (GlcNAc...) asparagine; by host glycosylation is found at asparagine 244 and asparagine 272. Positions 313 to 333 (AVPVAVWLVSALAIGAGVAGG) are fusion peptide. 2 coiled-coil regions span residues 341–387 (ASGK…LLFW) and 397–429 (QEQC…GWGL). Residues 376-392 (AQNRRGLDLLFWEQGGL) form an immunosuppression region. The short motif at 393–401 (CKALQEQCC) is the CX6CC element. A glycan (N-linked (GlcNAc...) asparagine; by host) is linked at asparagine 404. A helical transmembrane segment spans residues 443 to 463 (LQTGITLVALLLLVILAGPCI). Residue cysteine 462 is the site of S-palmitoyl cysteine; by host attachment. Residues 464-488 (LRQLRHLPSRVRYPHYSLINPESSL) lie on the Cytoplasmic side of the membrane.

In terms of assembly, the mature envelope protein (Env) consists of a trimer of SU-TM heterodimers attached by a labile interchain disulfide bond. Specific enzymatic cleavages in vivo yield mature proteins. Envelope glycoproteins are synthesized as an inactive precursor that is N-glycosylated and processed likely by host cell furin or by a furin-like protease in the Golgi to yield the mature SU and TM proteins. The cleavage site between SU and TM requires the minimal sequence [KR]-X-[KR]-R. Post-translationally, the CXXC motif is highly conserved across a broad range of retroviral envelope proteins. It is thought to participate in the formation of a labile disulfide bond possibly with the CX6CC motif present in the transmembrane protein. Isomerization of the intersubunit disulfide bond to an SU intrachain disulfide bond is thought to occur upon receptor recognition in order to allow membrane fusion. In terms of processing, the transmembrane protein is palmitoylated.

Its subcellular location is the virion membrane. It localises to the host cell membrane. In terms of biological role, the surface protein (SU) attaches the virus to the host cell by binding to its receptor. This interaction triggers the refolding of the transmembrane protein (TM) and is thought to activate its fusogenic potential by unmasking its fusion peptide. Fusion occurs at the host cell plasma membrane. The transmembrane protein (TM) acts as a class I viral fusion protein. Under the current model, the protein has at least 3 conformational states: pre-fusion native state, pre-hairpin intermediate state, and post-fusion hairpin state. During viral and target cell membrane fusion, the coiled coil regions (heptad repeats) assume a trimer-of-hairpins structure, positioning the fusion peptide in close proximity to the C-terminal region of the ectodomain. The formation of this structure appears to drive apposition and subsequent fusion of viral and target cell membranes. Membranes fusion leads to delivery of the nucleocapsid into the cytoplasm. The polypeptide is Envelope glycoprotein gp62 (env) (Human T-cell leukemia virus 1 (isolate Caribbea CH subtype A) (HTLV-1)).